The primary structure comprises 1341 residues: Pleckstrin homology domain-containing family G member 3 (1341 aa).

The segment at 1–68 (MPVSTALHQD…PNSNNNSSGW (68 aa)) is disordered. Residues 18-29 (SLVSTTSSSGSS) are compositionally biased toward low complexity. Polar residues-rich tracts occupy residues 42–51 (SEASAQNGTG) and 59–68 (PNSNNNSSGW). Position 76 is a phosphoserine (Ser-76). In terms of domain architecture, DH spans 93–272 (YLGRVVREIV…TCVAWYINDM (180 aa)). In terms of domain architecture, PH spans 296–394 (DLTTYGELVL…WTHHIKRLIL (99 aa)). Phosphoserine occurs at positions 433 and 502. Residues 433-482 (SQDEVSSHVRQGRRQSEPGHTLFSRATLPSRQQGFEMPGLKGRRKSEPTR) are disordered. Disordered stretches follow at residues 508–657 (DFGQ…EFPE) and 684–715 (PEGS…LLPP). Composition is skewed to acidic residues over residues 529-541 (ELEE…EEEE) and 570-580 (GSEEEEEEEES). Phosphoserine occurs at positions 571, 694, 695, 737, 759, 762, and 766. The span at 695–707 (SEEEEEEEMEAAQ) shows a compositional bias: acidic residues. The interval 775 to 832 (SIGDSLSNPPTPEVIIGADMVTDNGPSVNGTESPSAGSGCPTEQDRSSCKKKESALST) is disordered. Polar residues predominate over residues 798–810 (NGPSVNGTESPSA). The span at 817–832 (EQDRSSCKKKESALST) shows a compositional bias: basic and acidic residues. Phosphoserine occurs at positions 862, 899, 900, and 947. Disordered stretches follow at residues 876-930 (SRFN…EFCP), 939-958 (ERME…SQAN), 1071-1097 (KVTP…SGGK), and 1117-1162 (HGTS…PFDT). Over residues 939–948 (ERMESSERSP) the composition is skewed to basic and acidic residues. Polar residues predominate over residues 949–958 (RTGSGQSQAN). 7 positions are modified to phosphoserine: Ser-1129, Ser-1134, Ser-1136, Ser-1141, Ser-1155, Ser-1158, and Ser-1201. Positions 1135-1162 (FSPSAVSPRTTSPGARSSARSPLSPFDT) are enriched in polar residues. 2 disordered regions span residues 1204-1249 (ENIV…LNGG) and 1271-1341 (KGPH…NSVG). Residues 1309-1320 (QPKEHGPRDSAD) show a composition bias toward basic and acidic residues.

It localises to the cytoplasm. The protein resides in the cytoskeleton. In terms of biological role, plays a role in controlling cell polarity and cell motility by selectively binding newly polymerized actin and activating RAC1 and CDC42 to enhance local actin polymerization. The polypeptide is Pleckstrin homology domain-containing family G member 3 (Mus musculus (Mouse)).